The following is a 101-amino-acid chain: Secreted enzymes activator (101 aa).

The span at 1–10 shows a compositional bias: basic residues; it reads MSRRRRRASA. Disordered stretches follow at residues 1–26 and 45–101; these read MSRR…PYGS and TRLA…NGRG. Positions 45 to 60 are enriched in low complexity; that stretch reads TRLAASSRASRAAVGS. Positions 55–74 form a DNA-binding region, H-T-H motif; that stretch reads RAAVGSFDGAKNRPASSRRQ.

Its function is as follows. Increases the production of several extracellular enzymes, like alkaline phosphatase, amylase, protease or lipase. When present in high concentrations, delays the production of pigments and sporulation. The sequence is that of Secreted enzymes activator (saf) from Streptomyces griseus.